The sequence spans 131 residues: Large ribosomal subunit protein bL17 (131 aa).

This sequence belongs to the bacterial ribosomal protein bL17 family. In terms of assembly, part of the 50S ribosomal subunit. Contacts protein L32.

The polypeptide is Large ribosomal subunit protein bL17 (Shewanella violacea (strain JCM 10179 / CIP 106290 / LMG 19151 / DSS12)).